A 285-amino-acid polypeptide reads, in one-letter code: 4-hydroxybenzoate octaprenyltransferase (285 aa).

Transmembrane regions (helical) follow at residues 28–48 (LWAM…WIFV), 86–106 (IAAW…FALV), 110–130 (NALT…YPFF), 133–153 (FFAI…PMAF), 165–185 (WLML…YAMV), 210–230 (IMLC…LLGL), 232–252 (WPYW…YTLI), and 262–284 (AAFR…AYAI).

The protein belongs to the UbiA prenyltransferase family. The cofactor is Mg(2+).

It is found in the cell inner membrane. The enzyme catalyses all-trans-octaprenyl diphosphate + 4-hydroxybenzoate = 4-hydroxy-3-(all-trans-octaprenyl)benzoate + diphosphate. It participates in cofactor biosynthesis; ubiquinone biosynthesis. Catalyzes the prenylation of para-hydroxybenzoate (PHB) with an all-trans polyprenyl group. Mediates the second step in the final reaction sequence of ubiquinone-8 (UQ-8) biosynthesis, which is the condensation of the polyisoprenoid side chain with PHB, generating the first membrane-bound Q intermediate 3-octaprenyl-4-hydroxybenzoate. The chain is 4-hydroxybenzoate octaprenyltransferase from Cupriavidus necator (strain ATCC 17699 / DSM 428 / KCTC 22496 / NCIMB 10442 / H16 / Stanier 337) (Ralstonia eutropha).